We begin with the raw amino-acid sequence, 558 residues long: Galactoside 2-alpha-L-fucosyltransferase (558 aa).

The Cytoplasmic segment spans residues 1–43; the sequence is MDQNSYRRRSSPIRTTTGGSKSVNFSELLQMKYLSSGTMKLTR. The chain crosses the membrane as a helical; Signal-anchor for type II membrane protein span at residues 44–64; sequence TFTTCLIVFSVLVAFSMIFHQ. Topologically, residues 65-558 are lumenal; sequence HPSDSNRIMG…EDISWGLKLV (494 aa). N-linked (GlcNAc...) asparagine glycans are attached at residues Asn88 and Asn504.

The protein belongs to the glycosyltransferase 37 family. As to quaternary structure, homodimer. Interacts with MUR3, XLT2, XXT2 and XXT5. In terms of tissue distribution, expressed in roots, stems, leaves, flowers, siliques and seedlings.

It localises to the golgi apparatus. The protein localises to the golgi stack membrane. The protein resides in the golgi apparatus membrane. In terms of biological role, involved in cell wall biosynthesis. Is both necessary and sufficient for the addition of the terminal fucosyl residue on xyloglucan side chains, but is not involved in the fucosylation of other cell wall components. Associates with other xyloglucan-synthesizing enzymes to form multiprotein complexes for xyloglucan synthesis in the Golgi. This Arabidopsis thaliana (Mouse-ear cress) protein is Galactoside 2-alpha-L-fucosyltransferase (FUT1).